The following is a 101-amino-acid chain: Small nuclear ribonucleoprotein Sm D3 (101 aa).

Residues 6 to 78 (IPVKLLNEAQ…IKFIVVPDLL (73 aa)) form the Sm domain.

Belongs to the snRNP core protein family. In terms of assembly, component of the Sm core complex, present in spliceosomal snRNP U1, U2, U4/U6 and U5. The core complex contains SMB1, SMD1, SMD2, SMD3, SME1, SMX3 and SMX2 (Sm proteins B, D1, D2, D3, E, F and G, respectively), and is probably a heptameric ring structure. SMD3 specifically interacts with SMB1. Belongs to the CWC complex (or CEF1-associated complex), a spliceosome sub-complex reminiscent of a late-stage spliceosome composed of the U2, U5 and U6 snRNAs and at least BUD13, BUD31, BRR2, CDC40, CEF1, CLF1, CUS1, CWC2, CWC15, CWC21, CWC22, CWC23, CWC24, CWC25, CWC27, ECM2, HSH155, IST3, ISY1, LEA1, MSL1, NTC20, PRP8, PRP9, PRP11, PRP19, PRP21, PRP22, PRP45, PRP46, SLU7, SMB1, SMD1, SMD2, SMD3, SMX2, SMX3, SNT309, SNU114, SPP2, SYF1, SYF2, RSE1 and YJU2. Component of the U4/U6-U5 tri-snRNP complex composed of the U4, U6 and U5 snRNAs and at least PRP3, PRP4, PRP6, PRP8, PRP18, PRP31, PRP38, SNU13, SNU23, SNU66, SNU114, SPP381, SMB1, SMD1, SMD2, SMD3, SMX2, SMX3, LSM2, LSM3, LSM4, LSM5, LSM6, LSM7, LSM8, BRR2 and DIB1.

Its subcellular location is the cytoplasm. It localises to the cytosol. The protein resides in the nucleus. Its function is as follows. Plays a role in pre-mRNA splicing as a core component of the spliceosomal U1, U2, U4 and U5 small nuclear ribonucleoproteins (snRNPs), the building blocks of the spliceosome. Also binds telomerase RNA and is required for its accumulation. The sequence is that of Small nuclear ribonucleoprotein Sm D3 (SMD3) from Saccharomyces cerevisiae (strain ATCC 204508 / S288c) (Baker's yeast).